We begin with the raw amino-acid sequence, 316 residues long: Protein C4 (316 aa).

The protein belongs to the poxviridae OPG031 protein family.

It is found in the host cytoplasm. Its subcellular location is the host nucleus. Functionally, plays a role in the inhibition of host NF-kappa-B activation. Mechanistically, blocks the subunit p65/RELA translocation into the host nucleus. This chain is Protein C4 (OPG031), found in Homo sapiens (Human).